A 228-amino-acid chain; its full sequence is MKILIVEDDIKTGEYLSKGLTEAGFVVDHADNGLTGYHLAMTAEYDLVILDIMLPDVNGWDIIRMLRSAGKGMPVLLLTALGTIEHRVKGLELGADDYLVKPFAFAELLARVRTLLRRGNTMITESQLKVADLSVDLVSRKVSRAGNRIVLTSKEFSLLEFFIRHQGEVLPRSLIAFFMVWVHEFLTADTNAIDVAVKRLRAKIDNDYGTKLNQTVRGVGYMLEIPDA.

The region spanning 2-116 (KILIVEDDIK…ELLARVRTLL (115 aa)) is the Response regulatory domain. 4-aspartylphosphate is present on D51. The segment at residues 125–225 (ESQLKVADLS…VRGVGYMLEI (101 aa)) is a DNA-binding region (ompR/PhoB-type).

Phosphorylated by SilS.

It localises to the cytoplasm. Component of the sil cation-efflux system that confers resistance to silver. Probable member of a two-component regulatory system SilS/SilR. The protein is Probable transcriptional regulatory protein SilR (silR) of Salmonella typhimurium.